The primary structure comprises 436 residues: tRNA-2-methylthio-N(6)-dimethylallyladenosine synthase (436 aa).

Residues Met1 to Arg115 form the MTTase N-terminal domain. Residues Cys10, Cys46, Cys80, Cys151, Cys155, and Cys158 each coordinate [4Fe-4S] cluster. The Radical SAM core domain occupies Arg137–Glu368. Positions Met371 to Lys432 constitute a TRAM domain.

Belongs to the methylthiotransferase family. MiaB subfamily. As to quaternary structure, monomer. [4Fe-4S] cluster is required as a cofactor.

Its subcellular location is the cytoplasm. The enzyme catalyses N(6)-dimethylallyladenosine(37) in tRNA + (sulfur carrier)-SH + AH2 + 2 S-adenosyl-L-methionine = 2-methylsulfanyl-N(6)-dimethylallyladenosine(37) in tRNA + (sulfur carrier)-H + 5'-deoxyadenosine + L-methionine + A + S-adenosyl-L-homocysteine + 2 H(+). Catalyzes the methylthiolation of N6-(dimethylallyl)adenosine (i(6)A), leading to the formation of 2-methylthio-N6-(dimethylallyl)adenosine (ms(2)i(6)A) at position 37 in tRNAs that read codons beginning with uridine. The chain is tRNA-2-methylthio-N(6)-dimethylallyladenosine synthase from Pseudothermotoga lettingae (strain ATCC BAA-301 / DSM 14385 / NBRC 107922 / TMO) (Thermotoga lettingae).